The primary structure comprises 359 residues: N-acetyl-gamma-glutamyl-phosphate reductase (359 aa).

Cysteine 162 is a catalytic residue.

This sequence belongs to the NAGSA dehydrogenase family. Type 1 subfamily.

The protein resides in the cytoplasm. It carries out the reaction N-acetyl-L-glutamate 5-semialdehyde + phosphate + NADP(+) = N-acetyl-L-glutamyl 5-phosphate + NADPH + H(+). It participates in amino-acid biosynthesis; L-arginine biosynthesis; N(2)-acetyl-L-ornithine from L-glutamate: step 3/4. In terms of biological role, catalyzes the NADPH-dependent reduction of N-acetyl-5-glutamyl phosphate to yield N-acetyl-L-glutamate 5-semialdehyde. This Prochlorococcus marinus (strain NATL2A) protein is N-acetyl-gamma-glutamyl-phosphate reductase.